Reading from the N-terminus, the 496-residue chain is Cruciferin BnC2 (496 aa).

Positions 1-23 (MARLSSLLYFSITVLIFLHGSTA) are cleaved as a signal peptide. Cystine bridges form between Cys-30-Cys-63 and Cys-106-Cys-313. Cupin type-1 domains follow at residues 35–269 (LNAL…RTAQ) and 319–468 (DNLD…EEAR). Thr-109 bears the Phosphothreonine mark. The interval 114-170 (SVFQPGSGSPFGEGQGQGQQGQGQGQGQGQGKGQQGQGKGQQGQSQGQQGQGQGFRD) is disordered. Gly residues predominate over residues 122–154 (SPFGEGQGQGQQGQGQGQGQGQGKGQQGQGKGQ). Tyr-336 is subject to Phosphotyrosine. Ser-338 carries the post-translational modification Phosphoserine. The residue at position 432 (Thr-432) is a Phosphothreonine.

It belongs to the 11S seed storage protein (globulins) family. As to quaternary structure, hexamer; each subunit is composed of an acidic and a basic chain derived from a single precursor and linked by a disulfide bond.

Functionally, this is a seed storage protein. The protein is Cruciferin BnC2 (BnC2) of Brassica napus (Rape).